We begin with the raw amino-acid sequence, 76 residues long: DNA polymerase III subunit theta (76 aa).

The DNA polymerase holoenzyme is a complex that contains 10 different types of subunits. These subunits are organized into 3 functionally essential subassemblies: the pol III core, the beta sliding clamp processivity factor and the clamp-loading complex. The pol III core (subunits alpha,epsilon and theta) contains the polymerase and the 3'-5' exonuclease proofreading activities. The polymerase is tethered to the template via the sliding clamp processivity factor. The clamp-loading complex assembles the beta processivity factor onto the primer template and plays a central role in the organization and communication at the replication fork. This complex contains delta, delta', psi and chi, and copies of either or both of two different DnaX proteins, gamma and tau. The composition of the holoenzyme is, therefore: (alpha,epsilon,theta)[2]-(gamma/tau)[3]-delta,delta', psi,chi-beta[4].

The catalysed reaction is DNA(n) + a 2'-deoxyribonucleoside 5'-triphosphate = DNA(n+1) + diphosphate. Functionally, DNA polymerase III is a complex, multichain enzyme responsible for most of the replicative synthesis in bacteria. This DNA polymerase also exhibits 3' to 5' exonuclease activity. The exact function of the theta subunit is unknown. This Escherichia coli O157:H7 protein is DNA polymerase III subunit theta (holE).